Here is a 224-residue protein sequence, read N- to C-terminus: Phosphoribosyltransferase domain-containing protein 1 (224 aa).

Residues Glu140 and Asp141 each coordinate Mg(2+). Residues 140 to 148 (EDIINTGRT), Lys172, 193 to 194 (FV), and Asp200 each bind GMP. Mg(2+) is bound at residue Asp200.

This sequence belongs to the purine/pyrimidine phosphoribosyltransferase family.

The protein is Phosphoribosyltransferase domain-containing protein 1 (prtfdc1) of Xenopus laevis (African clawed frog).